We begin with the raw amino-acid sequence, 217 residues long: GTP-binding protein Rit2 (217 aa).

Residues 27-34, 74-78, and 133-136 each bind GTP; these read GAGGVGKS, DTAGQ, and NKID.

The protein belongs to the small GTPase superfamily. Ras family. In terms of assembly, interacts with PLXNB3. Interacts with AFDN, the C-terminal domain of RALGDS and RLF, but not with RIN1 and PIK3CA. RLF binds exclusively to the active GTP-bound form. Binds calmodulin. Interacts with POU4F1 (via N-terminus); the interaction controls POU4F1 transactivation activity on some neuronal target genes. In terms of tissue distribution, expressed in ganglion cell layer (GCL), inner plexiform layer (IPL) and inner nuclear layer (INL) of the retina. Expressed in retinal ganglion cells (RGCs). Expressed in horizontal, bipolar and amacrine cells, but not Mueller glia, of the INL (at protein level). Neuron-specific. Expressed in ganglion cell layer (GCL) and inner plexiform layer (IPL).

The protein resides in the nucleus. It localises to the cell membrane. The catalysed reaction is GTP + H2O = GDP + phosphate + H(+). Alternates between an inactive form bound to GDP and an active form bound to GTP. Binds and exchanges GTP and GDP. Binds and modulates the activation of POU4F1 as gene expression regulator. This chain is GTP-binding protein Rit2 (Rit2), found in Mus musculus (Mouse).